The chain runs to 401 residues: Carbamoyl phosphate synthase small chain (401 aa).

The interval 1 to 203 (MTATPAWTIQ…EGYSTLGETD (203 aa)) is CPSase. 3 residues coordinate L-glutamine: Ser56, Gly255, and Gly257. The region spanning 207 to 395 (HVVALDYGVK…LNLIREKKGE (189 aa)) is the Glutamine amidotransferase type-1 domain. The Nucleophile role is filled by Cys284. 5 residues coordinate L-glutamine: Leu285, Gln288, Asn326, Gly328, and Phe329. Active-site residues include His368 and Glu370.

The protein belongs to the CarA family. Composed of two chains; the small (or glutamine) chain promotes the hydrolysis of glutamine to ammonia, which is used by the large (or ammonia) chain to synthesize carbamoyl phosphate. Tetramer of heterodimers (alpha,beta)4.

The catalysed reaction is hydrogencarbonate + L-glutamine + 2 ATP + H2O = carbamoyl phosphate + L-glutamate + 2 ADP + phosphate + 2 H(+). It catalyses the reaction L-glutamine + H2O = L-glutamate + NH4(+). It functions in the pathway amino-acid biosynthesis; L-arginine biosynthesis; carbamoyl phosphate from bicarbonate: step 1/1. The protein operates within pyrimidine metabolism; UMP biosynthesis via de novo pathway; (S)-dihydroorotate from bicarbonate: step 1/3. Functionally, small subunit of the glutamine-dependent carbamoyl phosphate synthetase (CPSase). CPSase catalyzes the formation of carbamoyl phosphate from the ammonia moiety of glutamine, carbonate, and phosphate donated by ATP, constituting the first step of 2 biosynthetic pathways, one leading to arginine and/or urea and the other to pyrimidine nucleotides. The small subunit (glutamine amidotransferase) binds and cleaves glutamine to supply the large subunit with the substrate ammonia. The polypeptide is Carbamoyl phosphate synthase small chain (Rhizobium meliloti (strain 1021) (Ensifer meliloti)).